The primary structure comprises 83 residues: MSSGGLLLLLGLLTLWAELTPVSSKDRPHFCHLPADTGPCKARFQAFYYHPVHRKCLEFIYGGCEGNANNFKTIDECKRTCAA.

A signal peptide spans 1 to 24 (MSSGGLLLLLGLLTLWAELTPVSS). In terms of domain architecture, BPTI/Kunitz inhibitor spans 31-81 (CHLPADTGPCKARFQAFYYHPVHRKCLEFIYGGCEGNANNFKTIDECKRTC). Intrachain disulfides connect Cys-31–Cys-81, Cys-40–Cys-64, and Cys-56–Cys-77.

It belongs to the venom Kunitz-type family. Expressed by the venom gland.

The protein localises to the secreted. Serine protease inhibitor. The protein is Kunitz-type serine protease inhibitor 28 of Drysdalia coronoides (White-lipped snake).